Reading from the N-terminus, the 229-residue chain is Probable endo-1,4-beta-xylanase A (229 aa).

The first 18 residues, 1–18, serve as a signal peptide directing secretion; the sequence is MVSFKYLFLAASALGALA. N-linked (GlcNAc...) asparagine glycosylation is found at Asn30 and Asn100. A GH11 domain is found at 41–229; sequence AGTPSSTGWN…SSGSSSITVY (189 aa). Glu125 functions as the Nucleophile in the catalytic mechanism. Glu216 (proton donor) is an active-site residue.

It belongs to the glycosyl hydrolase 11 (cellulase G) family.

It is found in the secreted. The enzyme catalyses Endohydrolysis of (1-&gt;4)-beta-D-xylosidic linkages in xylans.. It participates in glycan degradation; xylan degradation. Endo-1,4-beta-xylanase involved in the hydrolysis of xylan, a major structural heterogeneous polysaccharide found in plant biomass representing the second most abundant polysaccharide in the biosphere, after cellulose. The sequence is that of Probable endo-1,4-beta-xylanase A (xlnA) from Aspergillus clavatus (strain ATCC 1007 / CBS 513.65 / DSM 816 / NCTC 3887 / NRRL 1 / QM 1276 / 107).